We begin with the raw amino-acid sequence, 809 residues long: Leucine--tRNA ligase (809 aa).

Positions 40–50 (PYPSGRIHMGH) match the 'HIGH' region motif. The short motif at 579–583 (KMSKS) is the 'KMSKS' region element. Residue lysine 582 coordinates ATP.

The protein belongs to the class-I aminoacyl-tRNA synthetase family.

It localises to the cytoplasm. The catalysed reaction is tRNA(Leu) + L-leucine + ATP = L-leucyl-tRNA(Leu) + AMP + diphosphate. In Campylobacter jejuni subsp. doylei (strain ATCC BAA-1458 / RM4099 / 269.97), this protein is Leucine--tRNA ligase.